A 1938-amino-acid polypeptide reads, in one-letter code: Myosin-6 (1938 aa).

Residues Asp-32–Pro-81 form the Myosin N-terminal SH3-like domain. Positions Asp-85 to Asp-780 constitute a Myosin motor domain. Residue Lys-129 is modified to N6,N6,N6-trimethyllysine. Gly-178–Thr-185 serves as a coordination point for ATP. A Phosphothreonine modification is found at Thr-379. Ser-417 is subject to Phosphoserine. 2 actin-binding regions span residues Leu-657–Glu-679 and Lys-759–Gly-773. Residues Leu-783–Ala-812 enclose the IQ domain. Calmodulin-binding stretches follow at residues Ile-790–Val-807 and Ile-816–Lys-833. Positions Leu-842 to Glu-1938 form a coiled coil. A phosphoserine mark is found at Ser-1090 and Ser-1139. Tyr-1261 carries the post-translational modification Phosphotyrosine. A Phosphoserine modification is found at Ser-1271. Phosphothreonine occurs at positions 1277 and 1284. Ser-1309 is modified (phosphoserine). Tyr-1310 is modified (phosphotyrosine). Thr-1311 bears the Phosphothreonine mark. Residue Ser-1512 is modified to Phosphoserine. Position 1515 is a phosphothreonine (Thr-1515). A disordered region spans residues Glu-1909 to Glu-1938. Residues Lys-1925–Glu-1938 show a composition bias toward basic and acidic residues.

It belongs to the TRAFAC class myosin-kinesin ATPase superfamily. Myosin family. Muscle myosin is a hexameric protein that consists of 2 heavy chain subunits (MHC), 2 alkali light chain subunits (MLC) and 2 regulatory light chain subunits (MLC-2).

The protein resides in the cytoplasm. Its subcellular location is the myofibril. Functionally, muscle contraction. The sequence is that of Myosin-6 (Myh6) from Mus musculus (Mouse).